Consider the following 407-residue polypeptide: Acetate kinase (407 aa).

Asn-10 serves as a coordination point for Mg(2+). Position 17 (Lys-17) interacts with ATP. Arg-93 contacts substrate. Asp-150 (proton donor/acceptor) is an active-site residue. ATP contacts are provided by residues 210 to 214 (HLGNG), 284 to 286 (DMR), and 332 to 336 (GVGEN). Glu-386 is a Mg(2+) binding site.

It belongs to the acetokinase family. As to quaternary structure, homodimer. It depends on Mg(2+) as a cofactor. Requires Mn(2+) as cofactor.

The protein localises to the cytoplasm. The enzyme catalyses acetate + ATP = acetyl phosphate + ADP. It functions in the pathway metabolic intermediate biosynthesis; acetyl-CoA biosynthesis; acetyl-CoA from acetate: step 1/2. Functionally, catalyzes the formation of acetyl phosphate from acetate and ATP. Can also catalyze the reverse reaction. The sequence is that of Acetate kinase from Streptomyces coelicolor (strain ATCC BAA-471 / A3(2) / M145).